The primary structure comprises 223 residues: DNA mismatch repair protein MutH (223 aa).

Belongs to the MutH family.

Its subcellular location is the cytoplasm. Sequence-specific endonuclease that cleaves unmethylated GATC sequences. It is involved in DNA mismatch repair. This chain is DNA mismatch repair protein MutH, found in Shewanella sp. (strain W3-18-1).